The sequence spans 217 residues: Ribonuclease T (217 aa).

The region spanning 20 to 194 is the Exonuclease domain; the sequence is VVIDVETGGF…YDTDRTAELF (175 aa). Mg(2+)-binding residues include Asp23, Glu25, His181, and Asp186. His181 (proton donor/acceptor) is an active-site residue.

Belongs to the RNase T family. As to quaternary structure, homodimer. Mg(2+) serves as cofactor.

Its function is as follows. Trims short 3' overhangs of a variety of RNA species, leaving a one or two nucleotide 3' overhang. Responsible for the end-turnover of tRNA: specifically removes the terminal AMP residue from uncharged tRNA (tRNA-C-C-A). Also appears to be involved in tRNA biosynthesis. In Photorhabdus laumondii subsp. laumondii (strain DSM 15139 / CIP 105565 / TT01) (Photorhabdus luminescens subsp. laumondii), this protein is Ribonuclease T.